Consider the following 330-residue polypeptide: D-alanine--D-alanine ligase (330 aa).

Residues 122-323 (NRFLSGFGIR…MKEVLCTIIR (202 aa)) form the ATP-grasp domain. Position 151-206 (151-206 (TARMGLPLFVKPNVGGSSIATTKVVEAAQLLPAIGQAFSEGEEVMIERLICGTEVT)) interacts with ATP. D277, E290, and N292 together coordinate Mg(2+).

It belongs to the D-alanine--D-alanine ligase family. Mg(2+) serves as cofactor. The cofactor is Mn(2+).

The protein localises to the cytoplasm. The enzyme catalyses 2 D-alanine + ATP = D-alanyl-D-alanine + ADP + phosphate + H(+). The protein operates within cell wall biogenesis; peptidoglycan biosynthesis. Functionally, cell wall formation. This is D-alanine--D-alanine ligase from Porphyromonas gingivalis (strain ATCC 33277 / DSM 20709 / CIP 103683 / JCM 12257 / NCTC 11834 / 2561).